The chain runs to 365 residues: Class I histocompatibility antigen, Gogo-A*0201 alpha chain (365 aa).

The N-terminal stretch at 1–24 is a signal peptide; sequence MAVMAPRTLLLLLLGALALTQTWA. The interval 25–114 is alpha-1; sequence GSHSMRYFST…LRGYYNQSEA (90 aa). Residues 25–308 lie on the Extracellular side of the membrane; sequence GSHSMRYFST…EPSSQPTIPI (284 aa). Asn110 carries an N-linked (GlcNAc...) asparagine glycan. Residues 115-206 form an alpha-2 region; it reads GSHTIQKMYG…ENGKETLQRT (92 aa). Intrachain disulfides connect Cys125–Cys188 and Cys227–Cys283. The segment at 207 to 298 is alpha-3; it reads DAPKTHMTHH…SLPKPLTLRW (92 aa). The Ig-like C1-type domain occupies 209-295; it reads PKTHMTHHAV…QHESLPKPLT (87 aa). Residues 299 to 308 are connecting peptide; the sequence is EPSSQPTIPI. A helical membrane pass occupies residues 309 to 332; that stretch reads VGIIAGLVLFGAVIAGAVIAAVRW. The Cytoplasmic portion of the chain corresponds to 333 to 365; it reads RRKSSDRKGGSYSQAASSDSAQGSDVSLTACKV. Positions 338 to 365 are disordered; it reads DRKGGSYSQAASSDSAQGSDVSLTACKV. The span at 342 to 359 shows a compositional bias: low complexity; sequence GSYSQAASSDSAQGSDVS. The residue at position 343 (Ser343) is a Phosphoserine. Position 344 is a phosphotyrosine (Tyr344). A phosphoserine mark is found at Ser345, Ser349, Ser350, Ser352, Ser356, and Ser359.

This sequence belongs to the MHC class I family. Heterodimer of an alpha chain and a beta chain (beta-2-microglobulin).

Its subcellular location is the membrane. Its function is as follows. Involved in the presentation of foreign antigens to the immune system. This is Class I histocompatibility antigen, Gogo-A*0201 alpha chain from Gorilla gorilla gorilla (Western lowland gorilla).